The chain runs to 725 residues: D-(-)-3-hydroxybutyrate oligomer hydrolase (725 aa).

Positions 1-22 are cleaved as a signal peptide; sequence MNTTRDANRLRQRASLSGLALA. S322 acts as the Charge relay system in catalysis.

Belongs to the D-(-)-3-hydroxybutyrate oligomer hydrolase family.

The protein resides in the secreted. The catalysed reaction is (3R)-hydroxybutanoate dimer + H2O = 2 (R)-3-hydroxybutanoate + H(+). It functions in the pathway lipid metabolism; butanoate metabolism. In terms of biological role, participates in the degradation of poly-3-hydroxybutyrate (PHB). It works downstream of poly(3-hydroxybutyrate) depolymerase, hydrolyzing D(-)-3-hydroxybutyrate oligomers of various length (3HB-oligomers) into 3HB-monomers. The polypeptide is D-(-)-3-hydroxybutyrate oligomer hydrolase (Ralstonia nicotianae (strain ATCC BAA-1114 / GMI1000) (Ralstonia solanacearum)).